The chain runs to 174 residues: Protein MOTHER of FT and TFL1 homolog 2 (174 aa).

This sequence belongs to the phosphatidylethanolamine-binding protein family.

Its function is as follows. May form complexes with phosphorylated ligands by interfering with kinases and their effectors. This Oryza sativa subsp. japonica (Rice) protein is Protein MOTHER of FT and TFL1 homolog 2.